Consider the following 414-residue polypeptide: N-carbamoyl-L-amino-acid amidohydrolase (414 aa).

A divalent metal cation is bound by residues histidine 83, aspartate 94, glutamate 129, and histidine 195. An N-carbamoyl-L-alpha-amino acid contacts are provided by glutamine 198, histidine 231, asparagine 281, arginine 294, and glycine 363. The involved in dimerization stretch occupies residues 214-333; the sequence is GIAGPSWFKV…QIEKNMAAVP (120 aa). Histidine 388 contributes to the a divalent metal cation binding site.

The protein belongs to the peptidase M20 family. In terms of assembly, homodimer. It depends on Mn(2+) as a cofactor. Requires Ni(2+) as cofactor. The cofactor is Co(2+). Fe(2+) serves as cofactor.

It carries out the reaction an N-carbamoyl-L-alpha-amino acid + H2O + 2 H(+) = an L-alpha-amino acid + NH4(+) + CO2. The enzyme catalyses N-carbamoyl-L-methionine + H2O + 2 H(+) = L-methionine + NH4(+) + CO2. In terms of biological role, catalyzes the hydrolysis of N-carbamoyl-L-alpha-amino acids to free L-alpha-amino acids. Is strictly L-specific since it is inactive toward N-carbamoyl-D-alpha-amino acids. This Pseudomonas sp. (strain NS671) protein is N-carbamoyl-L-amino-acid amidohydrolase.